Here is a 261-residue protein sequence, read N- to C-terminus: Short-chain dehydrogenase/reductase ARMGADRAFT_1018421 (261 aa).

The NADP(+) site is built by I21, D68, N95, K128, Y161, K165, V194, and T196. The active-site Proton acceptor is Y161. The active-site Lowers pKa of active site Tyr is the K165.

It belongs to the short-chain dehydrogenases/reductases (SDR) family.

It functions in the pathway secondary metabolite biosynthesis. Its function is as follows. Short-chain dehydrogenase/reductase, part of the gene cluster that mediates the biosynthesis of melleolides, a range of antifungal and phytotoxic polyketide derivatives composed of an orsellinic acid (OA) moiety esterified to various sesquiterpene alcohols. The first step in melleolides biosynthesis is performed by the delta(6)-protoilludene synthase PRO1 which catalyzes the cyclization of farnesyl diphosphate to protoilludene. The orsellinic acid synthase armB produces OA by condensing acetyl-CoA with 3 malonyl-CoA units in a three-round chain elongation reaction folowed by a C2-C7 ring closure. ArmB further catalyzes the trans-esterification of OA to the various sesquiterpene alcohols resulting from the hydroxylation of protoilludene. The melleolides cluster also includes 5 cytochrome P450 monooxygenases, 4 NAD(+)-dependent oxidoreductases, one flavin-dependent oxidoreductase, and one O-methyltransferase. The cytochrome P450 monooxygenases may be involved in protoilludene hydroxylation to elaborate melleolides with multiple alcohol groups, such as melleolide D, which carries alcohol functionalities at C-4, C-5, C-10, and C-13. The role of the NAD(+)-dependent enzymes remains unknown. Numerous melleolides, including arnamial, show 5'-O-methylation of the aromatic moiety which may be catalyzed by the methyltransferase encoded in the cluster. The flavin-dependent oxidoreductase might represent the dehydrogenase yielding the aldehyde in position 1 of arnamial and other melleolides. Finally, several halogenase localized outside of the cluster, are able to catalyze the transfer of a single chlorine atom to the melleolide backbone, resulting in a 6'-chloromelleolide product. The protein is Short-chain dehydrogenase/reductase ARMGADRAFT_1018421 of Armillaria gallica (Bulbous honey fungus).